The primary structure comprises 740 residues: E3 ubiquitin-protein ligase WAV3 (740 aa).

Residues 14–105 (PRNSDAAAPD…AISNPSSPRS (92 aa)) form a disordered region. A compositionally biased stretch (low complexity) spans 49-67 (SGGSNPSTPRSTSSPSLRC). The segment covering 71–90 (DAQTPTAEQTSTPRSATKSP) has biased composition (polar residues). An RING-type; atypical zinc finger spans residues 122–167 (CGICLNSVKTGQGTAKYTAECSHAFHFPCIADYVRKQGKLVCPVCN). The region spanning 332-476 (DLVVVVDVGG…IPVTEHGFGE (145 aa)) is the VWFA domain. Positions 677–709 (QSQHQQQHNQRRRGSERETTTTMTLMDENGEPL) are disordered.

As to quaternary structure, interacts with SINAT1, SINAT2, SINAT3, SINAT4, SINAT5, TOR1/SPR2 and FIP2. In terms of tissue distribution, expressed in root tips and leaf primordia.

It catalyses the reaction S-ubiquitinyl-[E2 ubiquitin-conjugating enzyme]-L-cysteine + [acceptor protein]-L-lysine = [E2 ubiquitin-conjugating enzyme]-L-cysteine + N(6)-ubiquitinyl-[acceptor protein]-L-lysine.. Its function is as follows. E3 ubiquitin-protein ligase involved in the regulation of root growth. Acts as a positive regulator of root gravitropism. Possesses E3 protein ligase activity in vitro. This is E3 ubiquitin-protein ligase WAV3 from Arabidopsis thaliana (Mouse-ear cress).